The following is a 439-amino-acid chain: Nuclear distribution protein PAC1 (439 aa).

The stretch at 55-90 (NSIVRLQSKIMELEKNCEELQKSIDEQQSSTNQISN) forms a coiled coil. WD repeat units lie at residues 106–145 (TLDA…LPLQ), 149–193 (AHMD…TLSH), 199–240 (GHEH…CIKS), 243–282 (PHTQ…SMGI), 295–335 (IPDP…FIPH), 355–392 (DHNS…LSTT), and 402–438 (NKGF…TSFM).

The protein belongs to the WD repeat LIS1/nudF family. As to quaternary structure, self-associates. Interacts with NDL1 and dynein.

It is found in the cytoplasm. Its subcellular location is the cytoskeleton. The protein resides in the spindle pole. Positively regulates the activity of the minus-end directed microtubule motor protein dynein. Plays a central role in positioning the mitotic spindle at the bud neck during cell division. Targets cytoplasmic dynein to microtubule plus ends, thereby promoting dynein-mediated microtubule sliding along the bud cortex and consequently the movement of the mitotic spindle to the bud neck. The sequence is that of Nuclear distribution protein PAC1 from Kluyveromyces lactis (strain ATCC 8585 / CBS 2359 / DSM 70799 / NBRC 1267 / NRRL Y-1140 / WM37) (Yeast).